The chain runs to 737 residues: Palmitoyltransferase AKR1 (737 aa).

The segment at 1-47 is disordered; the sequence is MKQIDSEDSITVPNDTPEDNSASSMQPVMSNLSIEEHQSENEPIEQE. Residues 1 to 304 are Cytoplasmic-facing; the sequence is MKQIDSEDSI…VYFKKSLHTK (304 aa). The span at 9–33 shows a compositional bias: polar residues; the sequence is SITVPNDTPEDNSASSMQPVMSNLS. ANK repeat units lie at residues 54–84, 90–119, 124–153, 157–190, 194–223, and 227–256; these read PLLS…DLKH, ERVS…DVNF, LNAT…DPSV, QGFN…DIDC, NGRT…SVKA, and GGFT…DFFQ. 2 helical membrane passes run 305–325 and 326–346; these read LVTF…FASI and HPIF…YTLK. The Cytoplasmic portion of the chain corresponds to 347–364; sequence KYVIPAYAQRNTRQSFLK. Residues 365–385 traverse the membrane as a helical segment; the sequence is TPFLAGVFSGSVFWASYTWLT. Residues 386–396 are Lumenal-facing; sequence RIMPLTLIEEP. Residues 397-417 traverse the membrane as a helical segment; the sequence is ITNLLFFAGVVLLASLFVKLV. Topologically, residues 418–493 are cytoplasmic; it reads RSDPGLIPEE…YNDIGLRNHK (76 aa). The 51-residue stretch at 450-500 folds into the DHHC domain; that stretch reads HFCISTWVRKPIRSKFSNFSRALVTRFDHFCPWIYNDIGLRNHKTFLFFIL. Cysteine 480 acts as the S-palmitoyl cysteine intermediate in catalysis. The chain crosses the membrane as a helical span at residues 494-514; that stretch reads TFLFFILCLETCIFVFLKLCM. The Lumenal segment spans residues 515–547; that stretch reads EYFDVLEDTFEDDYDLNCGIFGEDLCAGFFFDT. Residues 548–568 form a helical membrane-spanning segment; the sequence is FTFLVLAWTCFQGIWVGFLTF. The Cytoplasmic segment spans residues 569 to 737; that stretch reads VQLFQTAKGV…ERHYLAEEIV (169 aa).

This sequence belongs to the DHHC palmitoyltransferase family. AKR/ZDHHC17 subfamily.

The protein localises to the early endosome membrane. The protein resides in the golgi apparatus membrane. The enzyme catalyses L-cysteinyl-[protein] + hexadecanoyl-CoA = S-hexadecanoyl-L-cysteinyl-[protein] + CoA. Functionally, palmitoyltransferase specific for casein kinase 1. This is Palmitoyltransferase AKR1 (AKR1) from Lachancea kluyveri (strain ATCC 58438 / CBS 3082 / BCRC 21498 / NBRC 1685 / JCM 7257 / NCYC 543 / NRRL Y-12651) (Yeast).